The sequence spans 222 residues: Ribonuclease T (222 aa).

Positions 20–194 constitute an Exonuclease domain; sequence VVIDVETAGF…YDTERTAELF (175 aa). The Mg(2+) site is built by Asp-23, Glu-25, His-181, and Asp-186. His-181 (proton donor/acceptor) is an active-site residue.

It belongs to the RNase T family. Homodimer. It depends on Mg(2+) as a cofactor.

In terms of biological role, trims short 3' overhangs of a variety of RNA species, leaving a one or two nucleotide 3' overhang. Responsible for the end-turnover of tRNA: specifically removes the terminal AMP residue from uncharged tRNA (tRNA-C-C-A). Also appears to be involved in tRNA biosynthesis. The protein is Ribonuclease T of Shewanella sp. (strain ANA-3).